We begin with the raw amino-acid sequence, 413 residues long: Protein FAM8A1 (413 aa).

The span at 1 to 10 (MAEGPEEARG) shows a compositional bias: basic and acidic residues. The segment at 1 to 105 (MAEGPEEARG…PEAAAPRERP (105 aa)) is disordered. Over residues 49 to 64 (APGRPTAPGLAAAAAA) the composition is skewed to low complexity. Residues 65–78 (DKLEPPRELRKRGE) are compositionally biased toward basic and acidic residues. A necessary and sufficient to interact with SYVN1 region spans residues 107 to 139 (RLSAREYSRQVHEWLWQSYCGYLTWHSGLAAFP). The tract at residues 217–236 (PVTRVGSAAPSRSPSETGRQ) is disordered. At Ser229 the chain carries Phosphoserine. An RDD domain is found at 242–408 (VIPSLAHRFM…DIVAGTIVVK (167 aa)). 3 consecutive transmembrane segments (helical) span residues 257-277 (FFIL…LSGI), 304-324 (MMVV…ICIW), and 371-391 (ALIK…LLFF).

Component of the HRD1 complex, which comprises at least SYNV1/HRD1, FAM8A1, HERPUD1/HERP, OS9, SEL1L and UBE2J1. This interaction stabilizes FAM8A1 protein, preventing its proteasomal degradation. FAM8A1 binding to SYNV1 may promote recruitment of HERPUD1 to the HRD1 complex. As to expression, ubiquitously expressed, with a higher level of expression in testis.

It is found in the membrane. Plays a role in the assembly of the HRD1 complex, a complex involved in the ubiquitin-proteasome-dependent process of ER-associated degradation (ERAD). This Homo sapiens (Human) protein is Protein FAM8A1 (FAM8A1).